An 891-amino-acid chain; its full sequence is MAASVEYNRQVSAHPWPTNAQPKAAFDLFSSSGGGRRRSGADSDSDDEDSVPPDWRSLYSPRLDVEPSVKDPRDEATSDAWVKRHPALVRLTGKHPFNSEPPLPRLMSHGFITPVPLHYVRNHGAVPKADWSTWTVEVTGLVKRPVKFTMEELVTGFQAVEFPVTLVCAGNRRKEQNMVRQSSGFNWGPGAISTTVWRGVRLRDVLRRCGVMGAGAASNVCFEGAEDLPGGGGCKYGTSLRRSVAMDPARDVILAYMQNGEPLAPDHGFPVRVIVPGFIGGRMVKWLKRIVVACNESESYYHYRDNRVLPSHVDAELANAEAWWYKPECMINELNINSVITTPGHDEVLPINALTTQKPYTMKGYAYSGGGRKVTRVEVTLDGGETWQVCDLEHPERPTKYGKYWCWCFWSVEVEVLELLGAKEMAVRAWDEALNTQPERLIWNLMGMMNNCWFRVKINVCRPHKGEIGLVFDHPTQPGNQSGGWMARQKHIETSETTQGTLKRSTSTPFMSTASAQFTMSEVRRHASKDSAWIVVHGHVYDCTAFLKDHPGGADSILINAGSDCTEEFDAIHSAKARGLLEMYRVGELIVTGNDYSPQSSNADLAAIVEAPAVVVPRLPASAVALANPREKVRCRLVDKKSMSHNVRLFRFALPSPDQKLGLPVGKHVYVCASTGGKLCMRAYTPTSSVEEVGHVELLIKIYFKDEDPKFPAGGLMSQYLDALPLGAPVDIKGPVGHIEYAGRGAFTVGGERRFARRLAMVAGGTGITPVYQVIQAVLRDQPDDTTEMHLVYANRTEDDMLLREEIDRWAAANPARLKVWYVVSKVGRPEDAWEYGVGRVDEQVLREHLPLGGDGETLALVCGPPAMLECTVRPGLEKMGYDLDKDCLVF.

Residues methionine 1 to serine 78 are disordered. Basic and acidic residues predominate over residues leucine 63 to alanine 76. Cysteine 168 is a binding site for Mo-molybdopterin. The Cytochrome b5 heme-binding domain occupies serine 515–isoleucine 590. Histidine 550 and histidine 573 together coordinate heme. One can recognise an FAD-binding FR-type domain in the interval arginine 630–alanine 742. FAD-binding positions include arginine 682–threonine 685, leucine 699–tyrosine 703, phenylalanine 704, phenylalanine 711, leucine 716–serine 718, and threonine 769.

Belongs to the nitrate reductase family. Homodimer. The cofactor is FAD. It depends on heme as a cofactor. Mo-molybdopterin is required as a cofactor.

It carries out the reaction nitrite + NAD(+) + H2O = nitrate + NADH + H(+). The catalysed reaction is nitrite + NADP(+) + H2O = nitrate + NADPH + H(+). Functionally, nitrate reductase is a key enzyme involved in the first step of nitrate assimilation in plants, fungi and bacteria. The chain is Nitrate reductase [NAD(P)H] (NAR-7) from Hordeum vulgare (Barley).